Here is a 243-residue protein sequence, read N- to C-terminus: Uridylate kinase (243 aa).

Residue 15 to 18 coordinates ATP; that stretch reads KLSG. Gly56 provides a ligand contact to UMP. Residues Gly57 and Arg61 each contribute to the ATP site. 138–145 is a binding site for UMP; it reads TGNPYFST. The ATP site is built by Asn166, Tyr172, and Asp175.

The protein belongs to the UMP kinase family. In terms of assembly, homohexamer.

The protein localises to the cytoplasm. The catalysed reaction is UMP + ATP = UDP + ADP. The protein operates within pyrimidine metabolism; CTP biosynthesis via de novo pathway; UDP from UMP (UMPK route): step 1/1. Its activity is regulated as follows. Inhibited by UTP. Its function is as follows. Catalyzes the reversible phosphorylation of UMP to UDP. The chain is Uridylate kinase from Mycoplasma genitalium (strain ATCC 33530 / DSM 19775 / NCTC 10195 / G37) (Mycoplasmoides genitalium).